A 76-amino-acid chain; its full sequence is Small ribosomal subunit protein bS16 (76 aa).

The protein belongs to the bacterial ribosomal protein bS16 family.

In Helicobacter pylori (strain P12), this protein is Small ribosomal subunit protein bS16.